A 22-amino-acid polypeptide reads, in one-letter code: Conantokin-Oc (22 aa).

The interval 1 to 22 is disordered; that stretch reads GEEERKAMAELEAKKAQEALKA. 4-carboxyglutamate occurs at positions 3, 4, 10, and 18.

As to expression, expressed by the venom duct.

The protein localises to the secreted. In terms of biological role, conantokins inhibit N-methyl-D-aspartate (NMDA) receptors. The chain is Conantokin-Oc from Conus ochroleucus (Perfect cone).